A 384-amino-acid polypeptide reads, in one-letter code: Substance-K receptor (384 aa).

The Extracellular portion of the chain corresponds to 1–32; it reads MGAHAIVTDANISSSLENNTTGITAFSMPGWQ. N-linked (GlcNAc...) asparagine glycans are attached at residues Asn11, Asn18, and Asn19. A helical membrane pass occupies residues 33–56; it reads LALWATAYLVLVLVAVTGNATVIW. Residues 57–69 are Cytoplasmic-facing; it reads IILAHQRMRTVTN. A helical membrane pass occupies residues 70–90; the sequence is YFIVNLALADLCMAAFNAAFN. The Extracellular segment spans residues 91–107; the sequence is FVYASHNIWYFGRAFCH. The cysteines at positions 106 and 181 are disulfide-linked. Residues 108 to 129 traverse the membrane as a helical segment; it reads FQNLFPITAMFVSIYSMTAIAA. Topologically, residues 130–149 are cytoplasmic; the sequence is DRYVAIVHPFQPRLSAPGTR. Residues 150–170 traverse the membrane as a helical segment; sequence AVIAGIWLLALALAFPQCFYS. The Extracellular segment spans residues 171-196; that stretch reads TITMDQGATKCVVVWPEDNGSKMLLL. A helical transmembrane segment spans residues 197-218; sequence YHLVVIALIYVLPLLVMLLAYS. Topologically, residues 219–251 are cytoplasmic; that stretch reads VIGLTLWRREVPRHQVHGASLRHLRAKKKFVKT. The helical transmembrane segment at 252–272 threads the bilayer; that stretch reads MVLVVVTFAICWLPYHFYFIL. At 273–290 the chain is on the extracellular side; the sequence is GSFQEDIYYHKFIQQVYL. Residues 291–310 form a helical membrane-spanning segment; that stretch reads ALFWLAMSSTMYNPIIYCCL. At 311–384 the chain is on the cytoplasmic side; it reads NHRFRSGFRL…GPQDGLPDEP (74 aa). Cys324 carries S-palmitoyl cysteine lipidation.

It belongs to the G-protein coupled receptor 1 family.

Its subcellular location is the cell membrane. This is a receptor for the tachykinin neuropeptide substance K (neurokinin A). It is associated with G proteins that activate a phosphatidylinositol-calcium second messenger system. The sequence is that of Substance-K receptor (TACR2) from Canis lupus familiaris (Dog).